The sequence spans 725 residues: Polyribonucleotide nucleotidyltransferase (725 aa).

Mg(2+) contacts are provided by Asp-487 and Asp-493. The KH domain occupies 554 to 613 (PRIETMQIPTDKIREVIGTGGKVIREIVEKTGAKIDIQDTGVVKIASSDGKAIKAAYNWI). Residues 623–691 (GMIYDGTVVK…ERGKIRLSMK (69 aa)) enclose the S1 motif domain. Positions 699 to 725 (EDLTEKLKAEREADRNRERQARQSAGE) are disordered. Positions 701-719 (LTEKLKAEREADRNRERQA) are enriched in basic and acidic residues.

The protein belongs to the polyribonucleotide nucleotidyltransferase family. Mg(2+) is required as a cofactor.

It is found in the cytoplasm. It carries out the reaction RNA(n+1) + phosphate = RNA(n) + a ribonucleoside 5'-diphosphate. Its function is as follows. Involved in mRNA degradation. Catalyzes the phosphorolysis of single-stranded polyribonucleotides processively in the 3'- to 5'-direction. The chain is Polyribonucleotide nucleotidyltransferase from Methylobacterium sp. (strain 4-46).